A 246-amino-acid chain; its full sequence is Phosphatidylserine decarboxylase proenzyme (246 aa).

The active-site Schiff-base intermediate with substrate; via pyruvic acid is Ser204. At Ser204 the chain carries Pyruvic acid (Ser); by autocatalysis.

It belongs to the phosphatidylserine decarboxylase family. PSD-A subfamily. Heterodimer of a large membrane-associated beta subunit and a small pyruvoyl-containing alpha subunit. Pyruvate is required as a cofactor. In terms of processing, is synthesized initially as an inactive proenzyme. Formation of the active enzyme involves a self-maturation process in which the active site pyruvoyl group is generated from an internal serine residue via an autocatalytic post-translational modification. Two non-identical subunits are generated from the proenzyme in this reaction, and the pyruvate is formed at the N-terminus of the alpha chain, which is derived from the carboxyl end of the proenzyme. The post-translation cleavage follows an unusual pathway, termed non-hydrolytic serinolysis, in which the side chain hydroxyl group of the serine supplies its oxygen atom to form the C-terminus of the beta chain, while the remainder of the serine residue undergoes an oxidative deamination to produce ammonia and the pyruvoyl prosthetic group on the alpha chain.

It localises to the cell membrane. It catalyses the reaction a 1,2-diacyl-sn-glycero-3-phospho-L-serine + H(+) = a 1,2-diacyl-sn-glycero-3-phosphoethanolamine + CO2. It functions in the pathway phospholipid metabolism; phosphatidylethanolamine biosynthesis; phosphatidylethanolamine from CDP-diacylglycerol: step 2/2. Its function is as follows. Catalyzes the formation of phosphatidylethanolamine (PtdEtn) from phosphatidylserine (PtdSer). This is Phosphatidylserine decarboxylase proenzyme from Zymomonas mobilis subsp. mobilis (strain ATCC 31821 / ZM4 / CP4).